Reading from the N-terminus, the 179-residue chain is Large ribosomal subunit protein uL6 (179 aa).

Belongs to the universal ribosomal protein uL6 family. Part of the 50S ribosomal subunit.

This protein binds to the 23S rRNA, and is important in its secondary structure. It is located near the subunit interface in the base of the L7/L12 stalk, and near the tRNA binding site of the peptidyltransferase center. In Chlorobium phaeovibrioides (strain DSM 265 / 1930) (Prosthecochloris vibrioformis (strain DSM 265)), this protein is Large ribosomal subunit protein uL6.